The following is a 1120-amino-acid chain: MSSLSRELVFLILQFLDEEKFKETVHKLEQESGFFFNMKYFEDEVHNGNWDEVEKYLSGFTKVDDNRYSMKIFFEIRKQKYLEALDRHDRPKAVDILVKDLKVFSTFNEELFKEITQLLTLENFRENEQLSKYGDTKSARAIMLVELKKLIEANPLFRDKLQFPTLRTSRLRTLINQSLNWQHQLCKNPRPNPDIKTLFVDHSCRLPNDARAPSPVNNPLLGSLPKAEGFPPLGAHGPFQPTPSPVPTPLAGWMSSPSSVPHPAVSGGPIALGAPSIQAALKHPRTPPSNSAVDYPSGDSDHVSKRTRPMGISDEVSLGVNMLPMTFPGQAHGHNQTFKAPDDLPKTVARTLSQGSSPMSMDFHPIKQTLLLVGTNVGDIGLWEVGSRERLVQKTFKVWDLSKCSMPLQAALVKEPVVSVNRVIWSPDGSLFGVAYSRHIVQLYSYHGGEDMRQHLEIDAHVGGVNDIAFSTPNKQLCVTTCGDDKTIKVWDAATGVKRYTFEGHEAPVYSICPHYKENIQFIFSTALDGKIKAWLYDNMGSRVDYEAPGRWCTTMAYSADGTRLFSCGTSKDGESFIVEWNESEGAVKRTYQGFHKRSLGVVQFDTTKNRYLAAGDDFSIKFWDMDTIQLLTAIDADGGLQASPRIRFNKEGSLLAVSANDNMIKVMANSDGLRLLHTVENLSSESSKPAINSIPMVERPASVVSIPGMNGDSRNMVDVKPVITEESNDKSKVWKLTEVGEPSQCRSLRLPENMRVTKISRLIFTNSGNAILALASNAIHLLWKWQRNDRNATGKATASLPPQQWQPASGILMTNDVAETNPEEAVPCFALSKNDSYVMSASGGKISLFNMMTFKTMATFMPPPPAATFLAFHPQDNNIIAIGMDDSTIQIYNVRVDEVKSKLKGHSKRITGLAFSNVLNVLVSSGADAQLCVWNTDGWEKQKSKVLQIPQGRSTSSLSDTRVQFHQDQVHFLVVHETQLAIYETTKLECMKQWPVRESAAPITHATFSCDSQLIYTSFMDATICVFSSANLRLRCRVNPSAYLPASLSNSNVHPLVIAAHPQESNMFAVGLSDGGVHIFEPLESEGKWGVAPPPENGSASAVTATPSVGASASDQPQR.

Residues leucine 4–phenylalanine 36 enclose the LisH domain. The 59-residue stretch at phenylalanine 34–lysine 92 folds into the CTLH domain. 2 disordered regions span residues alanine 210 to alanine 235 and histidine 283 to threonine 307. Serine 214 bears the Phosphoserine mark. 14 WD repeats span residues serine 353–glutamine 393, glutamate 415–glutamine 454, alanine 460–threonine 501, glycine 504–aspartate 545, alanine 548–threonine 591, phenylalanine 595–alanine 634, glycine 639–histidine 678, glutamate 699–glutamine 745, methionine 755–threonine 794, asparagine 822–threonine 860, proline 863–lysine 903, glycine 906–serine 945, glutamate 999–arginine 1038, and serine 1052–glycine 1091. The disordered stretch occupies residues glutamate 1087–arginine 1120. Positions glycine 1099 to arginine 1120 are enriched in polar residues.

As to quaternary structure, tetramer. Interacts with SNC1 (via TIR domain) and HDA19. Interacts with SPL (via EAR motif). Interacts with SPEAR3/TIE1. Binds to and corepresses GAF1/IDD2. In terms of tissue distribution, highly expressed in stamen primordium, microsporocyte, ovule primordium and megasporocyte during sporogenesis.

It is found in the nucleus. Its function is as follows. Transcriptional corepressor. Activates TIR-NB-LRR R protein-mediated immune responses through repression of negative regulators such as CNGC2/DND1. Negative regulator of jasmonate responses. The protein is Topless-related protein 1 (TPR1) of Arabidopsis thaliana (Mouse-ear cress).